The chain runs to 637 residues: Phosphomethylpyrimidine synthase (637 aa).

Substrate-binding positions include Asn242, Met271, Tyr300, His336, 356–358 (SRG), 397–400 (DGLR), and Glu436. A Zn(2+)-binding site is contributed by His440. Residue Tyr463 coordinates substrate. His504 contacts Zn(2+). [4Fe-4S] cluster-binding residues include Cys584, Cys587, and Cys592.

The protein belongs to the ThiC family. In terms of assembly, homodimer. [4Fe-4S] cluster serves as cofactor.

It catalyses the reaction 5-amino-1-(5-phospho-beta-D-ribosyl)imidazole + S-adenosyl-L-methionine = 4-amino-2-methyl-5-(phosphooxymethyl)pyrimidine + CO + 5'-deoxyadenosine + formate + L-methionine + 3 H(+). Its pathway is cofactor biosynthesis; thiamine diphosphate biosynthesis. Catalyzes the synthesis of the hydroxymethylpyrimidine phosphate (HMP-P) moiety of thiamine from aminoimidazole ribotide (AIR) in a radical S-adenosyl-L-methionine (SAM)-dependent reaction. This Janthinobacterium sp. (strain Marseille) (Minibacterium massiliensis) protein is Phosphomethylpyrimidine synthase.